Consider the following 54-residue polypeptide: Ovomucoid (54 aa).

Residues 4-54 (VDCSGYPQSACPQDYVPFCGSDNKTYSNKCNFCNAVADSNGTLTLSHFGKC) enclose the Kazal-like domain. Intrachain disulfides connect Cys-6/Cys-36, Cys-14/Cys-33, and Cys-22/Cys-54. N-linked (GlcNAc...) asparagine glycosylation is present at Asn-43.

It localises to the secreted. This Gallirallus australis (Weka) protein is Ovomucoid.